A 159-amino-acid polypeptide reads, in one-letter code: 2-C-methyl-D-erythritol 2,4-cyclodiphosphate synthase (159 aa).

A divalent metal cation-binding residues include D8 and H10. Residues 8–10 (DVH) and 34–35 (HS) each bind 4-CDP-2-C-methyl-D-erythritol 2-phosphate. H42 is a binding site for a divalent metal cation. Residues 56 to 58 (DIG), 61 to 65 (FPDTD), 100 to 106 (AQAPKML), 132 to 135 (TTTE), F139, and R142 each bind 4-CDP-2-C-methyl-D-erythritol 2-phosphate.

The protein belongs to the IspF family. Homotrimer. It depends on a divalent metal cation as a cofactor.

It catalyses the reaction 4-CDP-2-C-methyl-D-erythritol 2-phosphate = 2-C-methyl-D-erythritol 2,4-cyclic diphosphate + CMP. It functions in the pathway isoprenoid biosynthesis; isopentenyl diphosphate biosynthesis via DXP pathway; isopentenyl diphosphate from 1-deoxy-D-xylulose 5-phosphate: step 4/6. Involved in the biosynthesis of isopentenyl diphosphate (IPP) and dimethylallyl diphosphate (DMAPP), two major building blocks of isoprenoid compounds. Catalyzes the conversion of 4-diphosphocytidyl-2-C-methyl-D-erythritol 2-phosphate (CDP-ME2P) to 2-C-methyl-D-erythritol 2,4-cyclodiphosphate (ME-CPP) with a corresponding release of cytidine 5-monophosphate (CMP). The polypeptide is 2-C-methyl-D-erythritol 2,4-cyclodiphosphate synthase (Escherichia coli O81 (strain ED1a)).